A 961-amino-acid chain; its full sequence is Phosphofurin acidic cluster sorting protein 1 (961 aa).

A compositionally biased stretch (gly residues) spans Met1–Ser19. Disordered stretches follow at residues Met1–Thr70 and Val76–Ala95. Ala2 is modified (N-acetylalanine). The span at Gln20 to Gln34 shows a compositional bias: low complexity. At Ser28 the chain carries Phosphoserine. The span at Gln35 to Pro46 shows a compositional bias: pro residues. The residue at position 44 (Thr44) is a Phosphothreonine. Low complexity predominate over residues Ala51–Thr70. Tyr249 carries the phosphotyrosine modification. The segment covering Gly260–Asp271 has biased composition (basic and acidic residues). Disordered stretches follow at residues Gly260–Gln297 and Asn375–Thr426. Over residues Asn274–Asp291 the composition is skewed to acidic residues. The stretch at His351 to Asn375 forms a coiled coil. Residues Ser377 and Ser379 each carry the phosphoserine modification. The segment covering Met404–Thr426 has biased composition (polar residues). A phosphoserine mark is found at Ser428 and Ser493. Disordered stretches follow at residues Glu475–Gln540 and Ser758–Ser802. Phosphothreonine is present on Thr502. Residues Ser517, Ser526, Ser527, Ser529, and Ser532 each carry the phosphoserine modification. The segment covering Ser768–Ser802 has biased composition (low complexity).

This sequence belongs to the PACS family. In terms of assembly, associates with AP-1 and AP-3 but not with AP-2 complexes. Interacts with FURIN. Forms a ternary complex with FURIN and AP-1. Interacts with PKD2 (via acidic region). Interacts with SORL1. Interacts with WDR37.

The protein localises to the golgi apparatus. The protein resides in the trans-Golgi network. In terms of biological role, coat protein that is involved in the localization of trans-Golgi network (TGN) membrane proteins that contain acidic cluster sorting motifs. Controls the endosome-to-Golgi trafficking of furin and mannose-6-phosphate receptor by connecting the acidic-cluster-containing cytoplasmic domain of these molecules with the adapter-protein complex-1 (AP-1) of endosomal clathrin-coated membrane pits. Required for normal ER Ca2+ handling in lymphocytes. Together with WDR37, it plays an essential role in lymphocyte development, quiescence and survival. Required for stabilizing peripheral lymphocyte populations. The sequence is that of Phosphofurin acidic cluster sorting protein 1 (Pacs1) from Mus musculus (Mouse).